A 151-amino-acid chain; its full sequence is 3-hydroxyacyl-[acyl-carrier-protein] dehydratase FabZ (151 aa).

The active site involves His-54.

This sequence belongs to the thioester dehydratase family. FabZ subfamily.

It localises to the cytoplasm. The enzyme catalyses a (3R)-hydroxyacyl-[ACP] = a (2E)-enoyl-[ACP] + H2O. Functionally, involved in unsaturated fatty acids biosynthesis. Catalyzes the dehydration of short chain beta-hydroxyacyl-ACPs and long chain saturated and unsaturated beta-hydroxyacyl-ACPs. The chain is 3-hydroxyacyl-[acyl-carrier-protein] dehydratase FabZ from Pectobacterium atrosepticum (strain SCRI 1043 / ATCC BAA-672) (Erwinia carotovora subsp. atroseptica).